Here is a 702-residue protein sequence, read N- to C-terminus: Elongation factor G (702 aa).

One can recognise a tr-type G domain in the interval 8 to 290; the sequence is ERYRNIGISA…AVIDYLPSPV (283 aa). GTP is bound by residues 17–24, 88–92, and 142–145; these read AHIDAGKT, DTPGH, and NKMD.

Belongs to the TRAFAC class translation factor GTPase superfamily. Classic translation factor GTPase family. EF-G/EF-2 subfamily.

It is found in the cytoplasm. In terms of biological role, catalyzes the GTP-dependent ribosomal translocation step during translation elongation. During this step, the ribosome changes from the pre-translocational (PRE) to the post-translocational (POST) state as the newly formed A-site-bound peptidyl-tRNA and P-site-bound deacylated tRNA move to the P and E sites, respectively. Catalyzes the coordinated movement of the two tRNA molecules, the mRNA and conformational changes in the ribosome. This chain is Elongation factor G, found in Acidovorax ebreus (strain TPSY) (Diaphorobacter sp. (strain TPSY)).